Here is a 177-residue protein sequence, read N- to C-terminus: Acireductone dioxygenase (177 aa).

Residues His99, His101, Glu105, and His143 each contribute to the Fe(2+) site. Ni(2+)-binding residues include His99, His101, Glu105, and His143.

This sequence belongs to the acireductone dioxygenase (ARD) family. Monomer. It depends on Fe(2+) as a cofactor. Ni(2+) is required as a cofactor.

It catalyses the reaction 1,2-dihydroxy-5-(methylsulfanyl)pent-1-en-3-one + O2 = 3-(methylsulfanyl)propanoate + CO + formate + 2 H(+). The enzyme catalyses 1,2-dihydroxy-5-(methylsulfanyl)pent-1-en-3-one + O2 = 4-methylsulfanyl-2-oxobutanoate + formate + 2 H(+). It functions in the pathway amino-acid biosynthesis; L-methionine biosynthesis via salvage pathway; L-methionine from S-methyl-5-thio-alpha-D-ribose 1-phosphate: step 5/6. Functionally, catalyzes 2 different reactions between oxygen and the acireductone 1,2-dihydroxy-3-keto-5-methylthiopentene (DHK-MTPene) depending upon the metal bound in the active site. Fe-containing acireductone dioxygenase (Fe-ARD) produces formate and 2-keto-4-methylthiobutyrate (KMTB), the alpha-ketoacid precursor of methionine in the methionine recycle pathway. Ni-containing acireductone dioxygenase (Ni-ARD) produces methylthiopropionate, carbon monoxide and formate, and does not lie on the methionine recycle pathway. This chain is Acireductone dioxygenase, found in Leptospira interrogans serogroup Icterohaemorrhagiae serovar copenhageni (strain Fiocruz L1-130).